The chain runs to 188 residues: UPF0157 protein DR_2534 (188 aa).

Positions 1–12 (MGRGGRGVGGGR) are enriched in gly residues. The disordered stretch occupies residues 1–37 (MGRGGRGVGGGRPEGHGASVEGGRTRQTEGMDLISPD).

Belongs to the UPF0157 (GrpB) family.

In Deinococcus radiodurans (strain ATCC 13939 / DSM 20539 / JCM 16871 / CCUG 27074 / LMG 4051 / NBRC 15346 / NCIMB 9279 / VKM B-1422 / R1), this protein is UPF0157 protein DR_2534.